The sequence spans 254 residues: Acetylglutamate kinase (254 aa).

Residues 40–41 (GG), R62, and N158 contribute to the substrate site.

Belongs to the acetylglutamate kinase family. ArgB subfamily.

Its subcellular location is the cytoplasm. It carries out the reaction N-acetyl-L-glutamate + ATP = N-acetyl-L-glutamyl 5-phosphate + ADP. The protein operates within amino-acid biosynthesis; L-arginine biosynthesis; N(2)-acetyl-L-ornithine from L-glutamate: step 2/4. Its function is as follows. Catalyzes the ATP-dependent phosphorylation of N-acetyl-L-glutamate. This chain is Acetylglutamate kinase, found in Chloroflexus aurantiacus (strain ATCC 29366 / DSM 635 / J-10-fl).